The primary structure comprises 527 residues: Amine oxidase [flavin-containing] A (527 aa).

Methionine 1 bears the N-acetylmethionine mark. The Cytoplasmic segment spans residues 1–497 (MERQEKANNA…RTFWERNLPS (497 aa)). Position 383 is a phosphoserine (serine 383). An S-8alpha-FAD cysteine modification is found at cysteine 406. Residues 498–518 (VTGLLKIIGFSTSVTALWLAV) form a helical; Anchor for type IV membrane protein membrane-spanning segment. Over 519–527 (YKFRLLTRS) the chain is Mitochondrial intermembrane. The interaction with membrane phospholipid headgroups stretch occupies residues 520–522 (KFR).

It belongs to the flavin monoamine oxidase family. In terms of assembly, monomer, homo- or heterodimer (containing two subunits of similar size). Each subunit contains a covalently bound flavin. Enzymatically active as monomer. It depends on FAD as a cofactor.

The protein resides in the mitochondrion outer membrane. The enzyme catalyses a secondary aliphatic amine + O2 + H2O = a primary amine + an aldehyde + H2O2. It catalyses the reaction a primary methyl amine + O2 + H2O = an aldehyde + H2O2 + NH4(+). The catalysed reaction is (R)-adrenaline + O2 + H2O = (R)-3,4-dihydroxymandelaldehyde + methylamine + H2O2. It carries out the reaction dopamine + O2 + H2O = 3,4-dihydroxyphenylacetaldehyde + H2O2 + NH4(+). The enzyme catalyses tyramine + O2 + H2O = (4-hydroxyphenyl)acetaldehyde + H2O2 + NH4(+). It catalyses the reaction (R)-noradrenaline + O2 + H2O = (R)-3,4-dihydroxymandelaldehyde + H2O2 + NH4(+). The catalysed reaction is serotonin + O2 + H2O = (5-hydroxyindol-3-yl)acetaldehyde + H2O2 + NH4(+). It carries out the reaction kynuramine + O2 + H2O = 3-(2-aminophenyl)-3-oxopropanal + H2O2 + NH4(+). The enzyme catalyses tryptamine + O2 + H2O = indole-3-acetaldehyde + H2O2 + NH4(+). It catalyses the reaction 2-phenylethylamine + O2 + H2O = 2-phenylacetaldehyde + H2O2 + NH4(+). Catalyzes the oxidative deamination of primary and some secondary amine such as neurotransmitters, with concomitant reduction of oxygen to hydrogen peroxide and has important functions in the metabolism of neuroactive and vasoactive amines in the central nervous system and peripheral tissues. Preferentially oxidizes serotonin. Also catalyzes the oxidative deamination of kynuramine to 3-(2-aminophenyl)-3-oxopropanal that can spontaneously condense to 4-hydroxyquinoline. In Sus scrofa (Pig), this protein is Amine oxidase [flavin-containing] A.